The following is a 156-amino-acid chain: Small ribosomal subunit protein uS7 (156 aa).

It belongs to the universal ribosomal protein uS7 family. Part of the 30S ribosomal subunit. Contacts proteins S9 and S11.

Functionally, one of the primary rRNA binding proteins, it binds directly to 16S rRNA where it nucleates assembly of the head domain of the 30S subunit. Is located at the subunit interface close to the decoding center, probably blocks exit of the E-site tRNA. The polypeptide is Small ribosomal subunit protein uS7 (Streptococcus gordonii (strain Challis / ATCC 35105 / BCRC 15272 / CH1 / DL1 / V288)).